The following is an 89-amino-acid chain: Small ribosomal subunit protein uS15 (89 aa).

Belongs to the universal ribosomal protein uS15 family. Part of the 30S ribosomal subunit. Forms a bridge to the 50S subunit in the 70S ribosome, contacting the 23S rRNA.

One of the primary rRNA binding proteins, it binds directly to 16S rRNA where it helps nucleate assembly of the platform of the 30S subunit by binding and bridging several RNA helices of the 16S rRNA. In terms of biological role, forms an intersubunit bridge (bridge B4) with the 23S rRNA of the 50S subunit in the ribosome. The polypeptide is Small ribosomal subunit protein uS15 (Rhodospirillum centenum (strain ATCC 51521 / SW)).